The primary structure comprises 1304 residues: Splicing factor 3B subunit 1 (1304 aa).

Disordered stretches follow at residues 100-119 (QYDPFAEHRPPKIADREDEY) and 124-148 (RTMIISPERLDPFADGGKTPDPKMN). Positions 104–119 (FAEHRPPKIADREDEY) are enriched in basic and acidic residues. Position 125 is a phosphothreonine (Thr125). Ser129 carries the post-translational modification Phosphoserine. Lys141 is subject to N6-acetyllysine. Residue Thr142 is modified to Phosphothreonine. Arg157 is modified (citrulline). Residues 172 to 360 (LAEKAKAGEL…PVLTPGKTPI (189 aa)) are disordered. The residue at position 194 (Ser194) is a Phosphoserine. Phosphothreonine is present on residues Thr203, Thr207, and Thr211. N6-acetyllysine; alternate is present on Lys214. Lys214 is covalently cross-linked (Glycyl lysine isopeptide (Lys-Gly) (interchain with G-Cter in SUMO2); alternate). Thr223 and Thr227 each carry phosphothreonine. Positions 223-491 (TPGHTPSLRW…VDESTLSPEE (269 aa)) are interaction with PPP1R8. Position 229 is a phosphoserine (Ser229). Residues 231-241 (RWDETPGRAKG) show a composition bias toward basic and acidic residues. 8 positions are modified to phosphothreonine: Thr235, Thr244, Thr248, Thr257, Thr261, Thr267, Thr273, and Thr278. At Ser287 the chain carries Phosphoserine. Positions 291–304 (NRWDETPKTERDTP) are enriched in basic and acidic residues. Phosphothreonine occurs at positions 296, 299, 303, and 313. Ser322 bears the Phosphoserine mark. Phosphothreonine is present on residues Thr326 and Thr328. Residue Ser332 is modified to Phosphoserine. Thr341 is subject to Phosphothreonine. The segment covering 342 to 352 (PASQMGGSTPV) has biased composition (polar residues). Phosphoserine occurs at positions 344 and 349. Phosphothreonine is present on residues Thr350 and Thr354. Ser400 bears the Phosphoserine mark. Residue Lys413 forms a Glycyl lysine isopeptide (Lys-Gly) (interchain with G-Cter in SUMO2); alternate linkage. Lys413 participates in a covalent cross-link: Glycyl lysine isopeptide (Lys-Gly) (interchain with G-Cter in SUMO1); alternate. The residue at position 426 (Thr426) is a Phosphothreonine. Residue Lys430 forms a Glycyl lysine isopeptide (Lys-Gly) (interchain with G-Cter in SUMO2) linkage. A Phosphothreonine; by DYRK1A modification is found at Thr434. Thr436 carries the phosphothreonine modification. Ser488 carries the post-translational modification Phosphoserine. HEAT repeat units lie at residues 529-568 (GPLFNQILPLLMSPTLEDQERHLLVKVIDRILYKLDDLVR), 569-603 (PYVHKILVVIEPLLIDEDYYARVEGREIISNLAKA), 604-641 (AGLATMISTMRPDIDNMDEYVRNTTARAFAVVASALGI), 643-677 (SLLPFLKAVCKSKKSWQARHTGIKIVQQIAILMGC), 680-718 (LPHLRSLVEIIEHGLVDEQQKVRTISALAIAALAEAATP), 763-801 (NYYTREVMLILIREFQSPDEEMKKIVLKVVKQCCGTDGV), 843-881 (KVGAAEIISRIVDDLKDEAEQYRKMVMETIEKIMGNLGA), 1010-1048 (TPPIKDLLPRLTPILKNRHEKVQENCIDLVGRIADRGAE), 1052-1090 (AREWMRICFELLELLKAHKKAIRRATVNTFGYIAKAIGP), 1122-1160 (TCSPFTVLPALMNEYRVPELNVQNGVLKSLSFLFEYIGE), and 1163-1201 (KDYIYAVTPLLEDALMDRDLVHRQTASAVVQHMSLGVYG). The tract at residues 547 to 550 (QERH) is interaction with PHF5A. Lys554 and Lys562 each carry N6-acetyllysine. Positions 1156 to 1157 (EY) are interaction with PHF5A. The segment at 1248-1304 (QYCLQGLFHPARKVRDVYWKIYNSIYIGSQDALIAHYPRIYNDDKNTYIRYDLDYIL) is interaction with SF3B3 and SF3B5.

This sequence belongs to the SF3B1 family. In terms of assembly, component of the 17S U2 SnRNP complex, a ribonucleoprotein complex that contains small nuclear RNA (snRNA) U2 and a number of specific proteins. Part of the SF3B subcomplex of the 17S U2 SnRNP complex. SF3B associates with the splicing subcomplex SF3A and a 12S RNA unit to form the U2 small nuclear ribonucleoproteins complex (U2 snRNP). Within the SF3B complex, interacts directly (via HEAT domain) with SF3B3, SF3B5, SF3B6 and (via HEAT domain) with PHF5A. The SF3B subcomplex interacts with U2AF2. Identified in the spliceosome C complex. Component of the minor (U12-type spliceosome) spliceosome. Within the minor spliceosome complex, interacts with SCNM1 and CRIPT. Component of the B-WICH complex, at least composed of SMARCA5/SNF2H, BAZ1B/WSTF, SF3B1, DEK, MYO1C, ERCC6, MYBBP1A and DDX21. Phosphorylated form interacts with PPP1R8. Interacts with PQBP1. Interacts with RBM17. Interacts with RBM39. Interacts with SETX. Interacts with RBM15. Interacts with USH1G. Interacts with SDE2. Interacts with U2AF1. Interacts with CACTIN. Interacts with ZRSR1. Interacts with CYREN. Phosphorylated. Phosphorylation occurs concomitantly with the splicing catalytic steps. Phosphorylation on Thr-244, Thr-248 and Thr-313 by cyclin-dependent kinases promotes interaction with PPP1R8 during mitosis. In terms of processing, citrullinated by PADI4. As to expression, ubiquitous.

It localises to the nucleus. The protein resides in the nucleus speckle. In terms of biological role, component of the 17S U2 SnRNP complex of the spliceosome, a large ribonucleoprotein complex that removes introns from transcribed pre-mRNAs. The 17S U2 SnRNP complex (1) directly participates in early spliceosome assembly and (2) mediates recognition of the intron branch site during pre-mRNA splicing by promoting the selection of the pre-mRNA branch-site adenosine, the nucleophile for the first step of splicing. Within the 17S U2 SnRNP complex, SF3B1 is part of the SF3B subcomplex, which is required for 'A' complex assembly formed by the stable binding of U2 snRNP to the branchpoint sequence in pre-mRNA. Sequence independent binding of SF3A and SF3B subcomplexes upstream of the branch site is essential, it may anchor U2 snRNP to the pre-mRNA. May also be involved in the assembly of the 'E' complex. Also acts as a component of the minor spliceosome, which is involved in the splicing of U12-type introns in pre-mRNAs. Together with other U2 snRNP complex components may also play a role in the selective processing of microRNAs (miRNAs) from the long primary miRNA transcript, pri-miR-17-92. This Mus musculus (Mouse) protein is Splicing factor 3B subunit 1.